A 439-amino-acid polypeptide reads, in one-letter code: Tol-Pal system protein TolB (439 aa).

Positions 1–24 (MRNGMRKIIAGVFIFVFLISNLYA) are cleaved as a signal peptide.

This sequence belongs to the TolB family. As to quaternary structure, the Tol-Pal system is composed of five core proteins: the inner membrane proteins TolA, TolQ and TolR, the periplasmic protein TolB and the outer membrane protein Pal. They form a network linking the inner and outer membranes and the peptidoglycan layer.

The protein localises to the periplasm. Part of the Tol-Pal system, which plays a role in outer membrane invagination during cell division and is important for maintaining outer membrane integrity. In Francisella tularensis subsp. tularensis (strain FSC 198), this protein is Tol-Pal system protein TolB.